A 662-amino-acid polypeptide reads, in one-letter code: Protein translocase subunit SecA 2 (662 aa).

ATP is bound by residues Q110, 128-132 (GEGKT), and D538.

Belongs to the SecA family. Monomer and homodimer. Part of the essential Sec protein translocation apparatus which comprises SecA, SecYEG and auxiliary proteins SecDF. Other proteins may also be involved.

The protein localises to the cell inner membrane. Its subcellular location is the cytoplasm. It carries out the reaction ATP + H2O + cellular proteinSide 1 = ADP + phosphate + cellular proteinSide 2.. Its function is as follows. Part of the Sec protein translocase complex. Interacts with the SecYEG preprotein conducting channel. Has a central role in coupling the hydrolysis of ATP to the transfer of proteins into and across the cell membrane, serving as an ATP-driven molecular motor driving the stepwise translocation of polypeptide chains across the membrane. This chain is Protein translocase subunit SecA 2, found in Chlorobium chlorochromatii (strain CaD3).